Here is a 961-residue protein sequence, read N- to C-terminus: E3 ubiquitin-protein ligase TRIM37 (961 aa).

At Met1 the chain carries N-acetylmethionine. Residues 15-55 form an RING-type; degenerate zinc finger; the sequence is CFICMEKLRDARLCPHCSKLCCFSCIRRWLTEQRAQCPHCR. The segment at 90 to 132 adopts a B box-type zinc-finger fold; that stretch reads NEKDKCENHHEKLSVFCWTCKKCICHQCALWGGMHGGHTFKPL. Zn(2+) contacts are provided by Cys95, His98, Cys117, and His124. Residues 132-234 adopt a coiled-coil conformation; the sequence is LAEIYEQHVT…VEHQLRSCSK (103 aa). The MATH domain occupies 276–403; it reads YDSATFVLEN…NDTVILRFQV (128 aa). A coiled-coil region spans residues 419-450; it reads ITQLEAAQTGYIQQINNLKERLTIELSRTQKS. Disordered stretches follow at residues 447–514, 529–561, 645–665, 776–811, and 874–961; these read TQKS…HHEL, VNHLDGSSSSASSTATSNTEENDIDEETMSGEN, SLLQPTASYSRKDKDQRKQQA, AVDSGENSRSKGDCQVLAEGSSGSSQSGSRHSSPRA, and LESH…GGGR. Phosphoserine is present on Ser454. The span at 504 to 514 shows a compositional bias: basic and acidic residues; that stretch reads KIQNEDYHHEL. Residues 535 to 545 show a composition bias toward low complexity; that stretch reads SSSSASSTATS. A compositionally biased stretch (acidic residues) spans 548–561; that stretch reads EENDIDEETMSGEN. Positions 776 to 787 are enriched in basic and acidic residues; it reads AVDSGENSRSKG. Residues 795–806 are compositionally biased toward low complexity; sequence GSSGSSQSGSRH. Residues 903-915 show a composition bias toward acidic residues; the sequence is SDIECDTENEEQE.

Belongs to the TRIM/RBCC family. In terms of assembly, associates with the PRC2/EED-EZH2 complex. In terms of processing, auto-ubiquitinated. As to expression, highly expressed in testis and brain. In embryonic tissues, expressed in epithelia, including ducts of the developing pancreas, epithelium of the midgut and nasal epithelium. In adult, detected in the central and peripheral nervous systems, including enteric ganglia, retina and the adrenal medulla (at protein level).

It localises to the chromosome. The protein resides in the cytoplasm. It is found in the perinuclear region. Its subcellular location is the peroxisome membrane. The catalysed reaction is S-ubiquitinyl-[E2 ubiquitin-conjugating enzyme]-L-cysteine + [acceptor protein]-L-lysine = [E2 ubiquitin-conjugating enzyme]-L-cysteine + N(6)-ubiquitinyl-[acceptor protein]-L-lysine.. The protein operates within protein modification; protein ubiquitination. Its function is as follows. E3 ubiquitin-protein ligase required to prevent centriole reduplication. Probably acts by ubiquitinating positive regulators of centriole reduplication. Mediates monoubiquitination of 'Lys-119' of histone H2A (H2AK119Ub), a specific tag for epigenetic transcriptional repression: associates with some Polycomb group (PcG) multiprotein PRC2-like complex and mediates repression of target genes. Also acts as a positive regulator of peroxisome import by mediating monoubiquitination of PEX5 at 'Lys-472': monoubiquitination promotes PEX5 stabilitation by preventing its polyubiquitination and degradation by the proteasome. The protein is E3 ubiquitin-protein ligase TRIM37 of Mus musculus (Mouse).